A 496-amino-acid polypeptide reads, in one-letter code: Putative aldehyde dehydrogenase-like protein C922.07c (496 aa).

241–246 (GSTKVG) provides a ligand contact to NAD(+). Catalysis depends on E263, which acts as the Proton acceptor. The active-site Nucleophile is the C297.

Belongs to the aldehyde dehydrogenase family.

It localises to the cytoplasm. Its subcellular location is the nucleus. This chain is Putative aldehyde dehydrogenase-like protein C922.07c, found in Schizosaccharomyces pombe (strain 972 / ATCC 24843) (Fission yeast).